Reading from the N-terminus, the 362-residue chain is MRRTPLYESHVSLGAKMIDFAGWEMPLQYTSINDEVATVRKNVALFDVSHMGEIFVEGEDTVEFVDYLLTNSFKNLRIGQVMYTVMCNEMGGIIDDLLTYRFGEKQAMLVVNAANIEKDFDWIVNQSKQFNVTVRNLSDQYGLIAVQGPLSERFLKTFVSDIDSLSYYTFASYSVFGKNCIVSRTGYTGEDGFEIYCHWDDTFTVWNELLQRGNNFGVKPAGLGARDVCRLEASYMLYGNDMDETTTPLEVGLSWVVKFDKDFIGKDSLIKQKELGLQKRIRGLEISDRRIARHGMYVFKGEKRVGVVTSGTFSPTLEKPVALAMLSSEIKISDEIEVDIRGSKVKAMIVKLPFYRGSVKSS.

It belongs to the GcvT family. The glycine cleavage system is composed of four proteins: P, T, L and H.

The enzyme catalyses N(6)-[(R)-S(8)-aminomethyldihydrolipoyl]-L-lysyl-[protein] + (6S)-5,6,7,8-tetrahydrofolate = N(6)-[(R)-dihydrolipoyl]-L-lysyl-[protein] + (6R)-5,10-methylene-5,6,7,8-tetrahydrofolate + NH4(+). Its function is as follows. The glycine cleavage system catalyzes the degradation of glycine. This is Aminomethyltransferase from Pseudothermotoga lettingae (strain ATCC BAA-301 / DSM 14385 / NBRC 107922 / TMO) (Thermotoga lettingae).